The following is a 491-amino-acid chain: Cytosolic Fe-S cluster assembly factor NAR1 (491 aa).

[4Fe-4S] cluster contacts are provided by Cys-20, Cys-59, Cys-62, Cys-65, Cys-177, Cys-231, Cys-412, and Cys-416.

Belongs to the NARF family. As to quaternary structure, interacts with CIA1.

Functionally, component of the cytosolic Fe/S protein assembly machinery. Required for maturation of extramitochondrial Fe/S proteins. May play a role in the transfer of pre-assembled Fe/S clusters to target apoproteins. This is Cytosolic Fe-S cluster assembly factor NAR1 (NAR1) from Saccharomyces cerevisiae (strain YJM789) (Baker's yeast).